We begin with the raw amino-acid sequence, 352 residues long: NAD(+)-dependent homoserine dehydrogenase (352 aa).

The protein belongs to the homoserine dehydrogenase family.

It carries out the reaction L-homoserine + NAD(+) = L-aspartate 4-semialdehyde + NADH + H(+). Functionally, dehydrogenase involved in the degradation of canavanine, the delta-oxa-analog of arginine, allowing growth on canavanine as sole nitrogen and carbon source. Catalyzes the conversion of homoserine and NAD(+) to aspartate-semialdehyde and NADH. Is highly specific for NAD(+) and cannot use NADP(+). The chain is NAD(+)-dependent homoserine dehydrogenase from Pseudomonas canavaninivorans.